The chain runs to 78 residues: DNA-directed RNA polymerase subunit Rpo5 (78 aa).

It belongs to the archaeal Rpo5/eukaryotic RPB5 RNA polymerase subunit family. As to quaternary structure, part of the RNA polymerase complex.

The protein resides in the cytoplasm. It carries out the reaction RNA(n) + a ribonucleoside 5'-triphosphate = RNA(n+1) + diphosphate. Its function is as follows. DNA-dependent RNA polymerase (RNAP) catalyzes the transcription of DNA into RNA using the four ribonucleoside triphosphates as substrates. The chain is DNA-directed RNA polymerase subunit Rpo5 from Methanococcus maripaludis (strain C7 / ATCC BAA-1331).